Consider the following 188-residue polypeptide: Transcription factor FapR (188 aa).

This sequence belongs to the FapR family.

Transcriptional factor involved in regulation of membrane lipid biosynthesis by repressing genes involved in fatty acid and phospholipid metabolism. The chain is Transcription factor FapR from Bacillus licheniformis (strain ATCC 14580 / DSM 13 / JCM 2505 / CCUG 7422 / NBRC 12200 / NCIMB 9375 / NCTC 10341 / NRRL NRS-1264 / Gibson 46).